We begin with the raw amino-acid sequence, 509 residues long: MEEIQRYLQPDRSQQHNFLYPLIFQEYIYALAHDHGLNRNRLILLENPGYNNKFSFLIVKRLITRMYQQNHFLISTNDSNKNAFLGCNKSLYSQMISEGFAFIVEIPFSLRLISSLSSFEGKKIFKSHNLRSIHSTFPFLEDNFSHLNYVLDILIPYPVHLEILVQTLRYWVKDASSLHLLRFFLHEYWNLNSLITSKKPGYSFSKKNQRFFFFLYNSYVYECESTFVFLRNQSSHLRSTSFGALLERIYFYGKIERLVEVFAKDFQITLWLFKDPFMHYVRYQGKSILASKGTFLLMNKWKFYLVNFWQCHFSLCFHTGRIHINQLSNHSRNFMGYLSSVRLNPSMVRSQMLENSFLINNAIKKFDTLVPLIPLIGSLAKANFCTVLGHPISKPVWSDLSDSDIIDRFGRICRNLFHYYSGSSKKKTLYRIKYILRLSCARTLARKHKSTVRTFFKRSGSELLEEFLTSEEQVLSLTFPRASSSLWGVYRSRIWYLDIFCINDLANYQ.

The protein belongs to the intron maturase 2 family. MatK subfamily.

The protein localises to the plastid. It is found in the chloroplast. Usually encoded in the trnK tRNA gene intron. Probably assists in splicing its own and other chloroplast group II introns. The chain is Maturase K from Nicotiana glauca (Glaucous tobacco).